We begin with the raw amino-acid sequence, 156 residues long: Small ribosomal subunit protein uS7 (156 aa).

It belongs to the universal ribosomal protein uS7 family. In terms of assembly, part of the 30S ribosomal subunit. Contacts proteins S9 and S11.

Functionally, one of the primary rRNA binding proteins, it binds directly to 16S rRNA where it nucleates assembly of the head domain of the 30S subunit. Is located at the subunit interface close to the decoding center, probably blocks exit of the E-site tRNA. This chain is Small ribosomal subunit protein uS7, found in Dictyoglomus thermophilum (strain ATCC 35947 / DSM 3960 / H-6-12).